The following is a 1311-amino-acid chain: MSRRKQAKPRSLKDPNCKLEDKIEDGEAVDCKKRPEDGEELEEDAVHSCDSCLQVFESLSDITEHKIHQCQLTDGVDVEDDPSCSWPASSPSSKDQTSPSHGEGCDFGEEEGGPGLPYPCQFCDKSFSRLSYLKHHEQSHSDKLPFKCTYCSRLFKHKRSRDRHIKLHTGDKKYHCSECDAAFSRSDHLKIHLKTHTSNKPYKCAVCRRGFLSSSSLHGHMQVHERNKDGSQSGSRMEDWKMKDTQKCSQCEEGFDFPEDLQKHIAECHPECSPNEDRAALQCMYCHELFVEETSLMNHIEQVHGGEKKNSCSICSESFLTVEELYSHMDSHQQPESCNHSNSPSLVTVGYTSVSSTTPDSNLSVDSSTMVEAAPPIPKSRGRKRAAQQTSDMTGPSSKQAKVTYSCIYCNKQLFSSLAVLQIHLKTMHLDKPEQAHICQYCLEVLPSLYNLNEHLKQVHEAQDPGLIVSAMPAIVYQCNFCSEVVNDLNTLQEHIRCSHGFANPAAKDSNAFFCPHCYMGFLTDSSLEEHIRQVHCDLSGSRFGSPVLGTPKEPVVEVYSCSYCTNSPIFNSVLKLNKHIKENHKNIPLALNYIHNGKKSRALSPLSPVAIEQTTLKMMQTVGGGPARASGEYICNQCGAKYTSLDSFQTHLKTHLDTVLPKLTCPQCNKEFPNQESLLKHVTIHFMITSTYYICESCDKQFTSVDDLQKHLLDMHTFVFFRCTLCQEVFDSKVSIQLHLAVKHSNEKKVYRCTSCNWDFRNETDLQLHVKHNHLENQGKVHKCIFCGESFGTEVELQCHITTHSKKYNCRFCSKAFHAVILLEKHLREKHCVFETKTPNCGTNGASEQVQKEEAELQTLLTNSQESHNSHDGSEEDVDSSEPMYGCDICGAAYTMETLLQNHQLRDHNIRPGESAIVKKKAELIKGNYKCNVCSRTFFSENGLREHMQTHLGPVKHYMCPICGERFPSLLTLTEHKVTHSKSLDTGNCRICKMPLQSEEEFLEHCQMHPDLRNSLTGFRCVVCMQTVTSTLELKIHGTFHMQKTGNGSSVQTTGRGQHVQKLYKCASCLKEFRSKQDLVKLDINGLPYGLCAGCVNLSKSSSPGLSLPPGASRPGLGQNESLSAMEGKGKAGGLKTRCSSCNVKFESESELQNHIQTVHRELVPDANSTQLKTPQVSPMPRISPSQSDEKKTYQCIKCQMVFYNEWDIQVHVANHMIDEGLNHECKLCSQTFDSPAKLQCHLIEHSFEGMGGTFKCPVCFTVFVQANKLQQHIFSAHGQEDKIYDCTQCPQKFFFQTELQNHTMTQHSS.

The C2H2-type 1; degenerate zinc finger occupies 47–67 (HSCDSCLQVFESLSDITEHKI). The segment at 81–108 (DPSCSWPASSPSSKDQTSPSHGEGCDFG) is disordered. Residues 83–102 (SCSWPASSPSSKDQTSPSHG) are compositionally biased toward low complexity. C2H2-type zinc fingers lie at residues 118–140 (YPCQFCDKSFSRLSYLKHHEQSH), 146–168 (FKCTYCSRLFKHKRSRDRHIKLH), 174–196 (YHCSECDAAFSRSDHLKIHLKTH), 202–224 (YKCAVCRRGFLSSSSLHGHMQVH), 246–269 (QKCSQCEEGFDFPEDLQKHIAECH), 281–304 (LQCMYCHELFVEETSLMNHIEQVH), and 310–332 (NSCSICSESFLTVEELYSHMDSH). Positions 357–398 (TTPDSNLSVDSSTMVEAAPPIPKSRGRKRAAQQTSDMTGPSS) are disordered. 2 stretches are compositionally biased toward polar residues: residues 359–370 (PDSNLSVDSSTM) and 387–398 (AQQTSDMTGPSS). The C2H2-type 9; degenerate zinc finger occupies 405–429 (YSCIYCNKQLFSSLAVLQIHLKTMH). C2H2-type zinc fingers lie at residues 437 to 460 (HICQYCLEVLPSLYNLNEHLKQVH), 477 to 500 (YQCNFCSEVVNDLNTLQEHIRCSH), and 513 to 536 (FFCPHCYMGFLTDSSLEEHIRQVH). Serine 546 carries the post-translational modification Phosphoserine. A C2H2-type 13; atypical zinc finger spans residues 560 to 585 (YSCSYCTNSPIFNSVLKLNKHIKENH). Serine 605 and serine 608 each carry phosphoserine. C2H2-type zinc fingers lie at residues 634–656 (YICNQCGAKYTSLDSFQTHLKTH), 664–686 (LTCPQCNKEFPNQESLLKHVTIH), 694–717 (YICESCDKQFTSVDDLQKHLLDMH), 722–745 (FRCTLCQEVFDSKVSIQLHLAVKH), 752–775 (YRCTSCNWDFRNETDLQLHVKHNH), 783–805 (HKCIFCGESFGTEVELQCHITTH), and 809–832 (YNCRFCSKAFHAVILLEKHLREKH). A disordered region spans residues 863 to 883 (TNSQESHNSHDGSEEDVDSSE). Residues 886–908 (YGCDICGAAYTMETLLQNHQLRD) form a C2H2-type 21; degenerate zinc finger. C2H2-type zinc fingers lie at residues 930-952 (YKCNVCSRTFFSENGLREHMQTH), 959-981 (YMCPICGERFPSLLTLTEHKVTH), and 1020-1042 (FRCVVCMQTVTSTLELKIHGTFH). The C2H2-type 25; degenerate zinc finger occupies 1065–1083 (YKCASCLKEFRSKQDLVKL). The span at 1105–1119 (PGLSLPPGASRPGLG) shows a compositional bias: low complexity. Residues 1105-1136 (PGLSLPPGASRPGLGQNESLSAMEGKGKAGGL) are disordered. 5 C2H2-type zinc fingers span residues 1138–1161 (TRCSSCNVKFESESELQNHIQTVH), 1195–1217 (YQCIKCQMVFYNEWDIQVHVANH), 1225–1247 (HECKLCSQTFDSPAKLQCHLIEH), 1256–1279 (FKCPVCFTVFVQANKLQQHIFSAH), and 1286–1309 (YDCTQCPQKFFFQTELQNHTMTQH). Residue lysine 1146 forms a Glycyl lysine isopeptide (Lys-Gly) (interchain with G-Cter in SUMO2) linkage.

This sequence belongs to the krueppel C2H2-type zinc-finger protein family. Interacts with EBF1. Interacts with SMAD1 and SMAD4. Widely expressed. Expressed in all B-cell stages.

It localises to the nucleus. In terms of biological role, transcription factor that can both act as an activator or a repressor depending on the context. Involved in BMP signaling and in the regulation of the immature compartment of the hematopoietic system. Associates with SMADs in response to BMP2 leading to activate transcription of BMP target genes. Acts as a transcriptional repressor via its interaction with EBF1, a transcription factor involved specification of B-cell lineage; this interaction preventing EBF1 to bind DNA and activate target genes. In Mus musculus (Mouse), this protein is Zinc finger protein 521 (Znf521).